Consider the following 359-residue polypeptide: 3-dehydroquinate synthase (359 aa).

Residues 105 to 109 (GVVGD), 129 to 130 (TT), Lys-142, Lys-151, and 169 to 172 (TIKT) contribute to the NAD(+) site. Residues Glu-184, His-247, and His-263 each contribute to the Zn(2+) site.

This sequence belongs to the sugar phosphate cyclases superfamily. Dehydroquinate synthase family. Requires Co(2+) as cofactor. Zn(2+) is required as a cofactor. NAD(+) serves as cofactor.

It localises to the cytoplasm. It carries out the reaction 7-phospho-2-dehydro-3-deoxy-D-arabino-heptonate = 3-dehydroquinate + phosphate. The protein operates within metabolic intermediate biosynthesis; chorismate biosynthesis; chorismate from D-erythrose 4-phosphate and phosphoenolpyruvate: step 2/7. In terms of biological role, catalyzes the conversion of 3-deoxy-D-arabino-heptulosonate 7-phosphate (DAHP) to dehydroquinate (DHQ). The polypeptide is 3-dehydroquinate synthase (Ruminiclostridium cellulolyticum (strain ATCC 35319 / DSM 5812 / JCM 6584 / H10) (Clostridium cellulolyticum)).